The chain runs to 261 residues: Ribosomal RNA small subunit methyltransferase J (261 aa).

Residues arginine 111–aspartate 112, glutamate 127–arginine 128, serine 163–serine 164, and aspartate 181 each bind S-adenosyl-L-methionine.

This sequence belongs to the methyltransferase superfamily. RsmJ family.

Its subcellular location is the cytoplasm. The enzyme catalyses guanosine(1516) in 16S rRNA + S-adenosyl-L-methionine = N(2)-methylguanosine(1516) in 16S rRNA + S-adenosyl-L-homocysteine + H(+). Specifically methylates the guanosine in position 1516 of 16S rRNA. The protein is Ribosomal RNA small subunit methyltransferase J of Shewanella sp. (strain ANA-3).